The sequence spans 159 residues: 17 kDa surface antigen (159 aa).

Positions 1-19 are cleaved as a signal peptide; that stretch reads MKLLSKIMIIALAASMLQA. Cys20 carries N-palmitoyl cysteine lipidation. Residue Cys20 is the site of S-diacylglycerol cysteine attachment.

It belongs to the rickettsiale 17 kDa surface antigen family.

The protein localises to the cell outer membrane. In Rickettsia prowazekii (strain Madrid E), this protein is 17 kDa surface antigen (omp).